The primary structure comprises 218 residues: Small ribosomal subunit protein uS3c (218 aa).

One can recognise a KH type-2 domain in the interval 43–118 (IKNYVQKNPR…RLNIAIARIS (76 aa)).

It belongs to the universal ribosomal protein uS3 family. As to quaternary structure, part of the 30S ribosomal subunit.

The protein resides in the plastid. It is found in the chloroplast. This is Small ribosomal subunit protein uS3c (rps3) from Acorus calamus (Sweet flag).